The sequence spans 530 residues: uncharacterized protein (530 aa).

This is an uncharacterized protein from Leptospira interrogans serogroup Icterohaemorrhagiae serovar Lai (strain 56601).